Reading from the N-terminus, the 474-residue chain is ABHD16B (474 aa).

The region spanning 175-293 is the AB hydrolase-1 domain; the sequence is VICCEGNAGF…MPQSWKGLVV (119 aa). Catalysis depends on charge relay system residues Ser-248, Asp-323, and His-423.

The protein belongs to the AB hydrolase superfamily. ABHD16 family.

The catalysed reaction is a 1,2-diacyl-sn-glycero-3-phospho-L-serine + H2O = a 2-acyl-sn-glycero-3-phospho-L-serine + a fatty acid + H(+). It catalyses the reaction a 1-acylglycerol + H2O = glycerol + a fatty acid + H(+). It carries out the reaction 1-(9Z-octadecenoyl)-glycerol + H2O = glycerol + (9Z)-octadecenoate + H(+). Hydrolyzes the sn-1 position of glycerophospholipids with high specificity towards phosphatidylserine (PS), PS-PLA1 enzyme. Also hydrolyzes the acyl chain of glycerolipids with a preference for the monoacylglycerol (MAG) 1-acylglycerol, MAG lipase. Plays a regulatory role in cellular lipid homeostasis by modulating genes involved in neutral lipid degradation and in phospholipid synthesis and composition. The polypeptide is ABHD16B (Rattus norvegicus (Rat)).